A 76-amino-acid chain; its full sequence is Vasotab-TY1 (76 aa).

Residues 1–21 (MKFTLFSVLVVLLIATFVAAD) form the signal peptide. Residues 22–76 (DCPRICTADFRPVCGTPSGGRRSANRTFGNQCSLDSHNCLNKGDTYDKLHDGECK) form the Kazal-like domain. 3 disulfide bridges follow: Cys23–Cys60, Cys27–Cys53, and Cys35–Cys75.

In terms of tissue distribution, expressed by the salivary gland.

Its subcellular location is the secreted. In terms of biological role, vasodilator protein that inhibits vasoconstriction of isolated rat femoral artery induced by phenylephrine. Since platelet aggregation and vasoconstriction are key hemostatic responses, particularly in small wounds, this protein likely participates in the antihemostatic responses during blood feeding. Blocks L-type calcium channels (Cav1/CACNA1) in left ventricular myocytes isolated from rat hearts. This Tabanus yao (Horsefly) protein is Vasotab-TY1.